Reading from the N-terminus, the 137-residue chain is Ribosome-binding factor A (137 aa).

It belongs to the RbfA family. Monomer. Binds 30S ribosomal subunits, but not 50S ribosomal subunits or 70S ribosomes.

It is found in the cytoplasm. In terms of biological role, one of several proteins that assist in the late maturation steps of the functional core of the 30S ribosomal subunit. Associates with free 30S ribosomal subunits (but not with 30S subunits that are part of 70S ribosomes or polysomes). Required for efficient processing of 16S rRNA. May interact with the 5'-terminal helix region of 16S rRNA. The polypeptide is Ribosome-binding factor A (Cereibacter sphaeroides (strain KD131 / KCTC 12085) (Rhodobacter sphaeroides)).